A 156-amino-acid chain; its full sequence is Ribosomal RNA large subunit methyltransferase H (156 aa).

Residues L73, G104, and 123–128 (LSPLTL) contribute to the S-adenosyl-L-methionine site.

The protein belongs to the RNA methyltransferase RlmH family. Homodimer.

It is found in the cytoplasm. It catalyses the reaction pseudouridine(1915) in 23S rRNA + S-adenosyl-L-methionine = N(3)-methylpseudouridine(1915) in 23S rRNA + S-adenosyl-L-homocysteine + H(+). In terms of biological role, specifically methylates the pseudouridine at position 1915 (m3Psi1915) in 23S rRNA. The protein is Ribosomal RNA large subunit methyltransferase H of Yersinia pseudotuberculosis serotype O:1b (strain IP 31758).